The primary structure comprises 350 residues: Quercetin 2,3-dioxygenase (350 aa).

Positions 1–145 (DTSSLIVEDA…FYYLGTNATD (145 aa)) are cupin 1. Cu cation is bound by residues histidine 66, histidine 68, and glutamate 73. Residue histidine 66 coordinates substrate. Glutamate 73 provides a ligand contact to substrate. Residues asparagine 90 and asparagine 109 are each glycosylated (N-linked (GlcNAc...) asparagine). Position 112 (histidine 112) interacts with Cu cation. A glycan (N-linked (GlcNAc...) asparagine) is linked at asparagine 142. The interval 146-205 (TTHTPYIPSSSDSSSTTGPDSSTISTLQSFDVYAELSFTPRTDTVNGTAPANTVWHTGAN) is linker. Residues 148–167 (HTPYIPSSSDSSSTTGPDSS) are disordered. Over residues 152–167 (IPSSSDSSSTTGPDSS) the composition is skewed to low complexity. N-linked (GlcNAc...) asparagine glycosylation is found at asparagine 191 and asparagine 248. Positions 206–350 (ALASTAGDPY…WSSVSFPADW (145 aa)) are cupin 2.

As to quaternary structure, homodimer. Requires Cu cation as cofactor. In terms of processing, the N-linked glycan at Asn-191 consists of Man(5)-GlcNAc(2).

It carries out the reaction quercetin + O2 = 2-(3,4-dihydroxybenzoyloxy)-4,6-dihydroxybenzoate + CO. Its pathway is flavonoid metabolism; quercetin degradation. Its activity is regulated as follows. Inhibited by diethyldithiocarbamate and kojic acid. Functionally, performs the first step in the degradation of the flavonoid quercetin by a dioxygenase reaction. The enzyme catalyzes the cleavage of the O-heteroaromatic ring of the flavonol quercetin yielding the depside 2-protocatechuoyl-phloroglucinol carboxylic acid and carbon monoxide. This involves the remarkable dioxygenolytic cleavage of two carbon-carbon bonds. The polypeptide is Quercetin 2,3-dioxygenase (Aspergillus japonicus).